A 205-amino-acid polypeptide reads, in one-letter code: Spermatogenesis-associated protein 24 (205 aa).

Residues 17-166 (LALDQLRDVI…QQKQIFRNHM (150 aa)) adopt a coiled-coil conformation. The tract at residues 138–185 (EDILNGKENEIKELQQVISQQKQIFRNHMSDFRIQKQQESYMAQVLDQ) is required for interaction with CBX5 and TBPL1. Residues 180 to 205 (AQVLDQKHKKASGTRQARSHQHPREK) are disordered. A compositionally biased stretch (basic residues) spans 186–205 (KHKKASGTRQARSHQHPREK).

This sequence belongs to the SPATA24 family. In terms of assembly, homodimer. Interacts with CBX3, CBX5, GMNN, GTF2B, TBPL1 and the polycomb proteins PHCF2, RNF2 and SCMH1 but not with CBX1 or PCGF2.

It localises to the cytoplasm. Its subcellular location is the nucleus. The protein localises to the nucleolus. It is found in the nucleoplasm. Binds DNA with high affinity but does not bind to TATA boxes. Synergises with GMNN and TBP in activation of TATA box-containing promoters and with GMNN and TBPL1 in activation of the NF1 TATA-less promoter. May play a role in cytoplasm movement and removal during spermiogenesis. The polypeptide is Spermatogenesis-associated protein 24 (SPATA24) (Homo sapiens (Human)).